The primary structure comprises 441 residues: Histidinol dehydrogenase (441 aa).

Substrate contacts are provided by threonine 240, glutamine 262, and histidine 265. Positions 262 and 265 each coordinate Zn(2+). Active-site proton acceptor residues include glutamate 332 and histidine 333. 4 residues coordinate substrate: histidine 333, aspartate 366, glutamate 420, and histidine 425. Residue aspartate 366 coordinates Zn(2+). Histidine 425 contacts Zn(2+).

This sequence belongs to the histidinol dehydrogenase family. Zn(2+) is required as a cofactor.

The enzyme catalyses L-histidinol + 2 NAD(+) + H2O = L-histidine + 2 NADH + 3 H(+). The protein operates within amino-acid biosynthesis; L-histidine biosynthesis; L-histidine from 5-phospho-alpha-D-ribose 1-diphosphate: step 9/9. In terms of biological role, catalyzes the sequential NAD-dependent oxidations of L-histidinol to L-histidinaldehyde and then to L-histidine. In Streptomyces avermitilis (strain ATCC 31267 / DSM 46492 / JCM 5070 / NBRC 14893 / NCIMB 12804 / NRRL 8165 / MA-4680), this protein is Histidinol dehydrogenase.